The following is a 321-amino-acid chain: Aspartate carbamoyltransferase catalytic subunit (321 aa).

Carbamoyl phosphate is bound by residues Arg65 and Thr66. Residue Lys93 participates in L-aspartate binding. Residues Arg115, His143, and Gln146 each contribute to the carbamoyl phosphate site. Positions 176 and 230 each coordinate L-aspartate. Carbamoyl phosphate-binding residues include Gly271 and Pro272.

This sequence belongs to the aspartate/ornithine carbamoyltransferase superfamily. ATCase family. In terms of assembly, heterododecamer (2C3:3R2) of six catalytic PyrB chains organized as two trimers (C3), and six regulatory PyrI chains organized as three dimers (R2).

The enzyme catalyses carbamoyl phosphate + L-aspartate = N-carbamoyl-L-aspartate + phosphate + H(+). It participates in pyrimidine metabolism; UMP biosynthesis via de novo pathway; (S)-dihydroorotate from bicarbonate: step 2/3. In terms of biological role, catalyzes the condensation of carbamoyl phosphate and aspartate to form carbamoyl aspartate and inorganic phosphate, the committed step in the de novo pyrimidine nucleotide biosynthesis pathway. This Bartonella tribocorum (strain CIP 105476 / IBS 506) protein is Aspartate carbamoyltransferase catalytic subunit.